The following is a 643-amino-acid chain: Lysophospholipase ARB_05919 (643 aa).

A signal peptide spans 1-22 (MMFIPATLGTFVLASLLPATVG). The region spanning 50-597 (DCPSTKPAVR…KMYCWDGTLN (548 aa)) is the PLA2c domain. N-linked (GlcNAc...) asparagine glycosylation is found at Asn142, Asn176, Asn195, Asn293, Asn466, Asn472, Asn482, Asn503, Asn524, Asn533, Asn552, and Asn597.

The protein belongs to the lysophospholipase family.

Its subcellular location is the secreted. It carries out the reaction a 1-acyl-sn-glycero-3-phosphocholine + H2O = sn-glycerol 3-phosphocholine + a fatty acid + H(+). Catalyzes the release of fatty acids from lysophospholipids. Phospholipase B may well contribute to pathogenicity by abetting the fungus in damaging host cell membranes. This chain is Lysophospholipase ARB_05919, found in Arthroderma benhamiae (strain ATCC MYA-4681 / CBS 112371) (Trichophyton mentagrophytes).